The primary structure comprises 710 residues: MFDIQKETIEWAGRPLTIETGRVARQADGAVMVSYGETTVLATAVGVKQAKPGVDFFPLTVNYQEKYFAAGKIPGGFFKREGRPTDKETLTSRLIDRPIRPLFVKGFKNEVQVMLTVLSHDLENDPDIVGMIGASAALVLSGLPFMGPIGAARVGYKDGEYVINPPCDEMDDSELDLVVAGTQDAVMMVESEAKELSEEVMLGAVMAGHKAFQPVIDMIIKLAERAAKEPWDYAPADHSAEEAKVRDLIGDDLAAAYTIVDKTERYKAVGAAKDKAVEALLQTEERPDGIDMTTLKDVMKAVESSIVRGGIIKTGKRIDGRSLDQVRSIVSEAGILPRTHGSALFTRGETQALVVATLGTGEDEQFIDALTGTYKERFMLHYNFPPYSVGETSFRLAPGRREIGHGKLAWRAVKAVLPTKEDFPYTIRLVSEITESNGSSSMATVCGASLSMMDAGVPITRPVSGIAMGLIKDPEGIAVLSDILGDEDHLGDMDFKVAGTTEGVTSLQMDIKIAGIDEEIMKTALAQASGGRLHILEEMGKALGEARTELGEFAPRIETITIPTDKIRDVIGSGGKVIREIVETTGAKVDVNDDGVIKVSSSDGASIKAALDWIHGLTAEPEEGQIYKGKVVKVMDFGAFVNFFGPKDGLVHVSQLKAERVNHPSDVVKEGQEVYVKLLGFDDRGKVRLSMKIIDQETGEEIKKEQEDAE.

Residues Asp-488 and Asp-494 each contribute to the Mg(2+) site. The region spanning 555 to 614 (PRIETITIPTDKIRDVIGSGGKVIREIVETTGAKVDVNDDGVIKVSSSDGASIKAALDWI) is the KH domain. The 69-residue stretch at 624-692 (GQIYKGKVVK…DRGKVRLSMK (69 aa)) folds into the S1 motif domain.

This sequence belongs to the polyribonucleotide nucleotidyltransferase family. It depends on Mg(2+) as a cofactor.

The protein localises to the cytoplasm. It catalyses the reaction RNA(n+1) + phosphate = RNA(n) + a ribonucleoside 5'-diphosphate. Functionally, involved in mRNA degradation. Catalyzes the phosphorolysis of single-stranded polyribonucleotides processively in the 3'- to 5'-direction. This Maricaulis maris (strain MCS10) (Caulobacter maris) protein is Polyribonucleotide nucleotidyltransferase.